Here is a 77-residue protein sequence, read N- to C-terminus: Putative defensin-like protein 158 (77 aa).

The first 24 residues, 1-24, serve as a signal peptide directing secretion; that stretch reads MANISWSHFLILMLVFSVVKKGKG. 4 cysteine pairs are disulfide-bonded: Cys31-Cys77, Cys41-Cys60, Cys46-Cys71, and Cys50-Cys73.

Belongs to the DEFL family.

The protein localises to the secreted. The protein is Putative defensin-like protein 158 (LCR23) of Arabidopsis thaliana (Mouse-ear cress).